The primary structure comprises 344 residues: UDP-3-O-acylglucosamine N-acyltransferase (344 aa).

The active-site Proton acceptor is the histidine 248.

It belongs to the transferase hexapeptide repeat family. LpxD subfamily. Homotrimer.

The enzyme catalyses a UDP-3-O-[(3R)-3-hydroxyacyl]-alpha-D-glucosamine + a (3R)-hydroxyacyl-[ACP] = a UDP-2-N,3-O-bis[(3R)-3-hydroxyacyl]-alpha-D-glucosamine + holo-[ACP] + H(+). It participates in bacterial outer membrane biogenesis; LPS lipid A biosynthesis. Its function is as follows. Catalyzes the N-acylation of UDP-3-O-acylglucosamine using 3-hydroxyacyl-ACP as the acyl donor. Is involved in the biosynthesis of lipid A, a phosphorylated glycolipid that anchors the lipopolysaccharide to the outer membrane of the cell. In Prochlorococcus marinus subsp. pastoris (strain CCMP1986 / NIES-2087 / MED4), this protein is UDP-3-O-acylglucosamine N-acyltransferase.